The following is a 1502-amino-acid chain: Heme-responsive zinc finger transcription factor HAP1 (1502 aa).

Residues 1–50 are compositionally biased toward polar residues; sequence MSNTPYNSSVPSIASMTQSSVSRSPNMHTATTPGANTSSNSPPLHMSSDS. Positions 1 to 56 are disordered; that stretch reads MSNTPYNSSVPSIASMTQSSVSRSPNMHTATTPGANTSSNSPPLHMSSDSSKIKRK. 6 residues coordinate Zn(2+): Cys64, Cys67, Cys74, Cys81, Cys84, and Cys93. The zn(2)-C6 fungal-type DNA-binding region spans 64–93; sequence CTICRKRKVKCDKLRPHCQQCTKTGVAHLC. A coiled-coil region spans residues 105–134; sequence EKELLKDNELKKLRERVKSLEKTLSKVHSS. The interval 126-208 is disordered; sequence KTLSKVHSSP…ANSSSLSISN (83 aa). A compositionally biased stretch (low complexity) spans 130–142; the sequence is KVHSSPSSNSLKS. Polar residues-rich tracts occupy residues 143–152 and 160–176; these read YNTPESSNLF and TLVN…SHMH. A compositionally biased stretch (low complexity) spans 177-208; that stretch reads QQQQQQQQQEQQQDFSRSANANANSSSLSISN. Positions 244-444 are heme-responsive; required for HMC formation; the sequence is KGDPYLKLLW…NTIPHHQPQS (201 aa). HRM repeat units lie at residues 280–285, 299–304, 323–328, 347–352, 389–394, and 415–420; these read KCPINH, KCPVDH, RCPVDH, and RCPIDH. Composition is skewed to polar residues over residues 432–447 and 706–734; these read STHN…SGSH and QLNA…NPTL. Disordered stretches follow at residues 432–458 and 706–767; these read STHN…SRKH and QLNA…KENQ. The span at 735 to 759 shows a compositional bias: low complexity; it reads NNNMSAATTNSSSRSGSADSRSGSN. Residues 1192–1197 form an HRM 7 repeat; it reads KCPVYQ. Residues 1384 to 1411 form a disordered region; sequence TANTDTSANGSALSTLTSPQGSDLASNS. Over residues 1388 to 1411 the composition is skewed to polar residues; sequence DTSANGSALSTLTSPQGSDLASNS.

In terms of assembly, binds DNA as a homodimer. Interacts with SRO9 and YDJ1. In the absence of heme, binds to at least four cellular proteins, including YDJ1 and SRO9, forming a high-molecular-weight complex (HMC) which results in repression of its activity and dictates its DNA-binding specificity.

Its subcellular location is the nucleus. In terms of biological role, regulation of oxygen dependent gene expression. It modulates the expression of Iso-1 (CYP1) and Iso-2 (CYP3) cytochrome c. In response to heme, promotes transcription of genes encoding functions required for respiration, controlling oxidative damage and repression of anaerobic genes. Binds to the sequence 5'-CGGNNNTNNCGG-3'. Is non-functional in terms of iso-1 cytochrome c expression in strain S288c and its derivatives. This chain is Heme-responsive zinc finger transcription factor HAP1 (HAP1), found in Saccharomyces cerevisiae (strain ATCC 204508 / S288c) (Baker's yeast).